A 132-amino-acid chain; its full sequence is Small ribosomal subunit protein eS6 (132 aa).

This sequence belongs to the eukaryotic ribosomal protein eS6 family.

In Methanosphaerula palustris (strain ATCC BAA-1556 / DSM 19958 / E1-9c), this protein is Small ribosomal subunit protein eS6.